The chain runs to 222 residues: Thiopurine S-methyltransferase (222 aa).

S-adenosyl-L-methionine contacts are provided by W10, L45, E66, and R124.

The protein belongs to the class I-like SAM-binding methyltransferase superfamily. TPMT family.

Its subcellular location is the cytoplasm. The enzyme catalyses S-adenosyl-L-methionine + a thiopurine = S-adenosyl-L-homocysteine + a thiopurine S-methylether.. The chain is Thiopurine S-methyltransferase from Methylococcus capsulatus (strain ATCC 33009 / NCIMB 11132 / Bath).